The following is a 654-amino-acid chain: Tetratricopeptide repeat protein 30 homolog (654 aa).

TPR repeat units follow at residues 10 to 43, 44 to 76, 145 to 178, 180 to 212, 393 to 426, 452 to 485, and 535 to 568; these read DGEY…STTR, AGLS…VPDV, ASTK…GGFN, HVAY…GIRN, CRSA…RAWI, SWRL…NYDD, and CIVN…GSGA.

This sequence belongs to the TTC30/dfy-1/fleer family.

Its subcellular location is the cell projection. The protein localises to the cilium. In terms of biological role, required for polyglutamylation of axonemal tubulin in sensory cilia. Plays a role in anterograde intraflagellar transport (IFT), the process by which cilia precursors are transported from the base of the cilium to the site of their incorporation at the tip. This is Tetratricopeptide repeat protein 30 homolog from Anopheles gambiae (African malaria mosquito).